The primary structure comprises 525 residues: Glutamyl-tRNA(Gln) amidotransferase subunit A, mitochondrial (525 aa).

Active-site charge relay system residues include Lys-76 and Ser-168. The Acyl-ester intermediate role is filled by Ser-192.

Belongs to the amidase family. GatA subfamily. As to quaternary structure, subunit of the heterotrimeric GatCAB amidotransferase (AdT) complex, composed of A (QRSL1), B (GATB) and C (GATC) subunits.

It localises to the mitochondrion. It carries out the reaction L-glutamyl-tRNA(Gln) + L-glutamine + ATP + H2O = L-glutaminyl-tRNA(Gln) + L-glutamate + ADP + phosphate + H(+). Its function is as follows. Allows the formation of correctly charged Gln-tRNA(Gln) through the transamidation of misacylated Glu-tRNA(Gln) in the mitochondria. The reaction takes place in the presence of glutamine and ATP through an activated gamma-phospho-Glu-tRNA(Gln). The chain is Glutamyl-tRNA(Gln) amidotransferase subunit A, mitochondrial (Qrsl1) from Mus musculus (Mouse).